Here is a 238-residue protein sequence, read N- to C-terminus: UPF0758 protein Ajs_3450 (238 aa).

The region spanning 116 to 238 (VFDSPQAVQH…ALSMAEQGLV (123 aa)) is the MPN domain. Zn(2+)-binding residues include His-187, His-189, and Asp-200. The JAMM motif signature appears at 187–200 (HNHPSGSVQPSRAD).

The protein belongs to the UPF0758 family.

The polypeptide is UPF0758 protein Ajs_3450 (Acidovorax sp. (strain JS42)).